A 431-amino-acid polypeptide reads, in one-letter code: tRNA(Ile)-lysidine synthase (431 aa).

ATP is bound at residue 19-24 (STGIDS).

Belongs to the tRNA(Ile)-lysidine synthase family.

Its subcellular location is the cytoplasm. The enzyme catalyses cytidine(34) in tRNA(Ile2) + L-lysine + ATP = lysidine(34) in tRNA(Ile2) + AMP + diphosphate + H(+). In terms of biological role, ligates lysine onto the cytidine present at position 34 of the AUA codon-specific tRNA(Ile) that contains the anticodon CAU, in an ATP-dependent manner. Cytidine is converted to lysidine, thus changing the amino acid specificity of the tRNA from methionine to isoleucine. This Staphylococcus aureus (strain Mu50 / ATCC 700699) protein is tRNA(Ile)-lysidine synthase.